Reading from the N-terminus, the 338-residue chain is Anthranilate phosphoribosyltransferase (338 aa).

Residues glycine 81, 84 to 85 (GD), serine 89, 91 to 94 (NIST), 109 to 117 (KHGNRSVSS), and serine 121 each bind 5-phospho-alpha-D-ribose 1-diphosphate. Glycine 81 lines the anthranilate pocket. Residue serine 93 participates in Mg(2+) binding. Asparagine 112 provides a ligand contact to anthranilate. Arginine 167 is a binding site for anthranilate. Residues aspartate 226 and glutamate 227 each coordinate Mg(2+).

It belongs to the anthranilate phosphoribosyltransferase family. As to quaternary structure, homodimer. It depends on Mg(2+) as a cofactor.

It catalyses the reaction N-(5-phospho-beta-D-ribosyl)anthranilate + diphosphate = 5-phospho-alpha-D-ribose 1-diphosphate + anthranilate. The protein operates within amino-acid biosynthesis; L-tryptophan biosynthesis; L-tryptophan from chorismate: step 2/5. Catalyzes the transfer of the phosphoribosyl group of 5-phosphorylribose-1-pyrophosphate (PRPP) to anthranilate to yield N-(5'-phosphoribosyl)-anthranilate (PRA). In Thioalkalivibrio sulfidiphilus (strain HL-EbGR7), this protein is Anthranilate phosphoribosyltransferase.